The chain runs to 301 residues: MNPAACVGRFAPSPTGPLHLGSLVAAVASFLDARAAGGRWLVRMEDLDRPRCEPGAAGIILRQLEAYGLVWDGDVLVQSQRDHAYAAALDMLKAQGAAYPCACTRAQLVQAPRNREGEMLYPGTCRNGLPADTVARAWRVRAPDASIRLHDRIHGDLQQNLAREVGDFIVKRADGLFAYQLAVVVDDAFQGITHVVRGADLLWNTPRQIYLQGLLGVPTPTYAHVPLITNVAGQKLSKQTRAPALPERGRDATLAQALVTLGHPPPGELAGAAPAELLTWASTHWHIENVPTHPVVAKPAP.

Residues 9–13 (RFAPS) and glutamate 45 each bind L-glutamate. Positions 12-22 (PSPTGPLHLGS) match the 'HIGH' region motif. The Zn(2+) site is built by cysteine 101, cysteine 103, tyrosine 121, and cysteine 125. L-glutamate contacts are provided by tyrosine 179 and arginine 197. The 'KMSKS' region motif lies at 235–239 (KLSKQ). Residue lysine 238 participates in ATP binding.

The protein belongs to the class-I aminoacyl-tRNA synthetase family. GluQ subfamily. It depends on Zn(2+) as a cofactor.

Functionally, catalyzes the tRNA-independent activation of glutamate in presence of ATP and the subsequent transfer of glutamate onto a tRNA(Asp). Glutamate is transferred on the 2-amino-5-(4,5-dihydroxy-2-cyclopenten-1-yl) moiety of the queuosine in the wobble position of the QUC anticodon. The sequence is that of Glutamyl-Q tRNA(Asp) synthetase from Thiobacillus denitrificans (strain ATCC 25259 / T1).